The following is a 602-amino-acid chain: Myotubularin (602 aa).

The segment at 1 to 32 (MASNSTPKYNSNSLENSLRRSPGDGMNHEQND) is disordered. Residues 17 to 31 (SLRRSPGDGMNHEQN) are compositionally biased toward basic and acidic residues. The 69-residue stretch at 28-96 (HEQNDEIPCL…GVIARIEKMG (69 aa)) folds into the GRAM domain. Positions 162–537 (GWAVYDAMTE…RHLELWVNYY (376 aa)) constitute a Myotubularin phosphatase domain. Residues N287, N312, and I313 each coordinate a 1,2-diacyl-sn-glycero-3-phospho-(1D-myo-inositol-3,5-bisphosphate). A 1,2-diacyl-sn-glycero-3-phospho-(1D-myo-inositol-3-phosphate) is bound by residues N287, N312, and I313. The active-site Phosphocysteine intermediate is C374. Residues S375, D376, G377, W378, D379, R380, K416, and R420 each coordinate a 1,2-diacyl-sn-glycero-3-phospho-(1D-myo-inositol-3,5-bisphosphate). A 1,2-diacyl-sn-glycero-3-phospho-(1D-myo-inositol-3-phosphate) contacts are provided by S375, D376, G377, W378, D379, and R380. Residue R420 participates in a 1,2-diacyl-sn-glycero-3-phospho-(1D-myo-inositol-3-phosphate) binding. The segment at 574–602 (QITNSPKMNSSTTSPSSPSQIMPQVHTPF) is disordered. The span at 583–592 (SSTTSPSSPS) shows a compositional bias: low complexity.

The protein belongs to the protein-tyrosine phosphatase family. Non-receptor class myotubularin subfamily.

The protein resides in the cytoplasm. The protein localises to the cell membrane. It is found in the cell projection. Its subcellular location is the filopodium. It localises to the ruffle. The protein resides in the late endosome. The protein localises to the myofibril. It is found in the sarcomere. It carries out the reaction a 1,2-diacyl-sn-glycero-3-phospho-(1D-myo-inositol-3-phosphate) + H2O = a 1,2-diacyl-sn-glycero-3-phospho-(1D-myo-inositol) + phosphate. It catalyses the reaction a 1,2-diacyl-sn-glycero-3-phospho-(1D-myo-inositol-3,5-bisphosphate) + H2O = a 1,2-diacyl-sn-glycero-3-phospho-(1D-myo-inositol-5-phosphate) + phosphate. The enzyme catalyses 1,2-dioctanoyl-sn-glycero-3-phospho-(1-D-myo-inositol-3-phosphate) + H2O = 1,2-dioctanoyl-sn-glycero-3-phospho-(1D-myo-inositol) + phosphate. The catalysed reaction is 1,2-dioctanoyl-sn-glycero-3-phospho-(1D-myo-inositol-3,5-bisphosphate) + H2O = 1,2-dioctanoyl-sn-glycero-3-phospho-(1D-myo-inositol-5-phosphate) + phosphate. It carries out the reaction 1,2-dihexadecanoyl-sn-glycero-3-phospho-(1D-myo-inositol-3,5-phosphate) + H2O = 1,2-dihexadecanoyl-sn-glycero-3-phospho-(1D-myo-inositol-5-phosphate) + phosphate. Its function is as follows. Lipid phosphatase which dephosphorylates phosphatidylinositol 3-monophosphate (PI3P) and phosphatidylinositol 3,5-bisphosphate (PI(3,5)P2). This is Myotubularin (mtm1) from Xenopus tropicalis (Western clawed frog).